The chain runs to 63 residues: Large ribosomal subunit protein uL29 (63 aa).

It belongs to the universal ribosomal protein uL29 family.

This is Large ribosomal subunit protein uL29 from Vibrio vulnificus (strain CMCP6).